A 131-amino-acid polypeptide reads, in one-letter code: Large ribosomal subunit protein uL22c (131 aa).

Belongs to the universal ribosomal protein uL22 family. In terms of assembly, part of the 50S ribosomal subunit.

It localises to the plastid. Its function is as follows. This protein binds specifically to 23S rRNA. The globular domain of the protein is located near the polypeptide exit tunnel on the outside of the subunit, while an extended beta-hairpin is found that lines the wall of the exit tunnel in the center of the 70S ribosome. The polypeptide is Large ribosomal subunit protein uL22c (rpl22) (Aneura mirabilis (Parasitic liverwort)).